Here is a 577-residue protein sequence, read N- to C-terminus: Arginine--tRNA ligase (577 aa).

Positions 122-132 (PNVAKEMHVGH) match the 'HIGH' region motif.

It belongs to the class-I aminoacyl-tRNA synthetase family. As to quaternary structure, monomer.

The protein localises to the cytoplasm. It catalyses the reaction tRNA(Arg) + L-arginine + ATP = L-arginyl-tRNA(Arg) + AMP + diphosphate. This chain is Arginine--tRNA ligase, found in Histophilus somni (strain 2336) (Haemophilus somnus).